A 149-amino-acid polypeptide reads, in one-letter code: Flagellar assembly factor FliW (149 aa).

The protein belongs to the FliW family. As to quaternary structure, interacts with translational regulator CsrA and flagellin(s).

The protein resides in the cytoplasm. Its function is as follows. Acts as an anti-CsrA protein, binds CsrA and prevents it from repressing translation of its target genes, one of which is flagellin. Binds to flagellin and participates in the assembly of the flagellum. The chain is Flagellar assembly factor FliW from Thermotoga sp. (strain RQ2).